Consider the following 686-residue polypeptide: Homoaconitase, mitochondrial (686 aa).

The N-terminal 17 residues, 1–17, are a transit peptide targeting the mitochondrion; the sequence is MRVVRCVRRFSASRAVS. Residues cysteine 337, cysteine 401, and cysteine 404 each coordinate [4Fe-4S] cluster.

It belongs to the aconitase/IPM isomerase family. [4Fe-4S] cluster serves as cofactor.

It is found in the mitochondrion. The catalysed reaction is (2R,3S)-homoisocitrate = cis-homoaconitate + H2O. It functions in the pathway amino-acid biosynthesis; L-lysine biosynthesis via AAA pathway; L-alpha-aminoadipate from 2-oxoglutarate: step 3/5. Functionally, catalyzes the reversible hydration of cis-homoaconitate to (2R,3S)-homoisocitrate, a step in the alpha-aminoadipate pathway for lysine biosynthesis. In Eremothecium gossypii (strain ATCC 10895 / CBS 109.51 / FGSC 9923 / NRRL Y-1056) (Yeast), this protein is Homoaconitase, mitochondrial (LYS4).